The sequence spans 365 residues: Chorismate synthase (365 aa).

Arg-48 and Arg-54 together coordinate NADP(+). FMN contacts are provided by residues 125 to 127, 237 to 238, Gly-277, 292 to 296, and Arg-318; these read RSS, NA, and KPTSS.

Belongs to the chorismate synthase family. In terms of assembly, homotetramer. FMNH2 is required as a cofactor.

It catalyses the reaction 5-O-(1-carboxyvinyl)-3-phosphoshikimate = chorismate + phosphate. It functions in the pathway metabolic intermediate biosynthesis; chorismate biosynthesis; chorismate from D-erythrose 4-phosphate and phosphoenolpyruvate: step 7/7. In terms of biological role, catalyzes the anti-1,4-elimination of the C-3 phosphate and the C-6 proR hydrogen from 5-enolpyruvylshikimate-3-phosphate (EPSP) to yield chorismate, which is the branch point compound that serves as the starting substrate for the three terminal pathways of aromatic amino acid biosynthesis. This reaction introduces a second double bond into the aromatic ring system. This Polaromonas naphthalenivorans (strain CJ2) protein is Chorismate synthase.